Here is a 508-residue protein sequence, read N- to C-terminus: Probable cytosol aminopeptidase (508 aa).

Positions 276 and 281 each coordinate Mn(2+). Residue Lys288 is part of the active site. Residues Asp299, Asp358, and Glu360 each contribute to the Mn(2+) site. Residue Arg362 is part of the active site.

This sequence belongs to the peptidase M17 family. It depends on Mn(2+) as a cofactor.

It localises to the cytoplasm. The enzyme catalyses Release of an N-terminal amino acid, Xaa-|-Yaa-, in which Xaa is preferably Leu, but may be other amino acids including Pro although not Arg or Lys, and Yaa may be Pro. Amino acid amides and methyl esters are also readily hydrolyzed, but rates on arylamides are exceedingly low.. It carries out the reaction Release of an N-terminal amino acid, preferentially leucine, but not glutamic or aspartic acids.. Its function is as follows. Presumably involved in the processing and regular turnover of intracellular proteins. Catalyzes the removal of unsubstituted N-terminal amino acids from various peptides. The polypeptide is Probable cytosol aminopeptidase (Chlorobium luteolum (strain DSM 273 / BCRC 81028 / 2530) (Pelodictyon luteolum)).